A 507-amino-acid polypeptide reads, in one-letter code: Phosphoprotein (507 aa).

Residues M1–A48 are interaction with N0. Disordered regions lie at residues S40–R98, G134–S174, N201–G231, and A251–D305. Residue S86 is modified to Phosphoserine. Over residues G134 to D145 the composition is skewed to low complexity. The span at N146–T160 shows a compositional bias: acidic residues. Phosphoserine is present on S151. Low complexity predominate over residues S260–G270. Over residues A279–K300 the composition is skewed to polar residues. Residues G304–G376 are multimerization. Interaction with the L polymerase stretches follow at residues S361–L377 and P396–L410. The interval G457 to K507 is x domain (XD). The tract at residues A459–K507 is interaction with the nucleocapsid (N-RNA).

It belongs to the morbillivirus P protein family. In terms of assembly, homotetramer. Interacts (via multimerization domain and XD domain) with polymerase L; this interaction forms the polymerase L-P complex. Interacts (via N-terminus) with N0 (via Ncore); this interaction allows P to chaperon N0 to avoid N polymerization and non-specific RNA binding before encapsidation. Interacts (via C-terminus) with N-RNA template (via Ntail); this interaction maintains the P/L complex anchored to the nucleocapsid template during the sequential transcription. Interacts (via C-terminus) with protein C this interaction allows C to associate with the ribonucleocapsid. In terms of processing, phosphorylation on serines by host CK2 is necessary for the formation of viral factories.

Its function is as follows. Essential cofactor of the RNA polymerase L that plays a central role in the transcription and replication by forming the polymerase complex with RNA polymerase L and recruiting L to the genomic N-RNA template for RNA synthesis. Also plays a central role in the encapsidation of nascent RNA chains by forming the encapsidation complex with the nucleocapsid protein N (N-P complex). Acts as a chaperone for newly synthesized free N protein, so-called N0, allowing encapsidation of nascent RNA chains during replication. The nucleoprotein protein N prevents excessive phosphorylation of P, which leads to down-regulation of viral transcription/ replication. Participates, together with N, in the formation of viral factories (viroplasms), which are large inclusions in the host cytoplasm where replication takes place. The sequence is that of Phosphoprotein (P/V) from Homo sapiens (Human).